A 224-amino-acid polypeptide reads, in one-letter code: Cytidylate kinase (224 aa).

Position 12-20 (12-20) interacts with ATP; the sequence is GPAGAGKST.

This sequence belongs to the cytidylate kinase family. Type 1 subfamily.

The protein resides in the cytoplasm. It catalyses the reaction CMP + ATP = CDP + ADP. The enzyme catalyses dCMP + ATP = dCDP + ADP. The polypeptide is Cytidylate kinase (Caldanaerobacter subterraneus subsp. tengcongensis (strain DSM 15242 / JCM 11007 / NBRC 100824 / MB4) (Thermoanaerobacter tengcongensis)).